The sequence spans 460 residues: Argininosuccinate lyase (460 aa).

Belongs to the lyase 1 family. Argininosuccinate lyase subfamily.

It localises to the cytoplasm. It catalyses the reaction 2-(N(omega)-L-arginino)succinate = fumarate + L-arginine. The protein operates within amino-acid biosynthesis; L-arginine biosynthesis; L-arginine from L-ornithine and carbamoyl phosphate: step 3/3. This is Argininosuccinate lyase from Solibacter usitatus (strain Ellin6076).